The chain runs to 591 residues: Probable acetolactate synthase large subunit (591 aa).

Residue glutamate 47 coordinates thiamine diphosphate. Residues arginine 149, 258–279 (HGTK…IGCR), and 301–320 (DIDP…IVGD) each bind FAD. Positions 396-476 (QNQMWMAHFF…VVICIFDNRT (81 aa)) are thiamine pyrophosphate binding. Aspartate 447 and asparagine 474 together coordinate Mg(2+).

This sequence belongs to the TPP enzyme family. As to quaternary structure, dimer of large and small chains. Mg(2+) is required as a cofactor. Thiamine diphosphate serves as cofactor.

It carries out the reaction 2 pyruvate + H(+) = (2S)-2-acetolactate + CO2. The protein operates within amino-acid biosynthesis; L-isoleucine biosynthesis; L-isoleucine from 2-oxobutanoate: step 1/4. It functions in the pathway amino-acid biosynthesis; L-valine biosynthesis; L-valine from pyruvate: step 1/4. This Methanocaldococcus jannaschii (strain ATCC 43067 / DSM 2661 / JAL-1 / JCM 10045 / NBRC 100440) (Methanococcus jannaschii) protein is Probable acetolactate synthase large subunit (ilvB).